Reading from the N-terminus, the 707-residue chain is Polyribonucleotide nucleotidyltransferase (707 aa).

Mg(2+)-binding residues include Asp-488 and Asp-494. In terms of domain architecture, KH spans 555-615; sequence PIIKVTKIDP…ENVDNAIALI (61 aa). The 68-residue stretch at 625-692 folds into the S1 motif domain; the sequence is GEILEGKITR…DLGRLQFKRV (68 aa).

Belongs to the polyribonucleotide nucleotidyltransferase family. Mg(2+) serves as cofactor.

The protein resides in the cytoplasm. It carries out the reaction RNA(n+1) + phosphate = RNA(n) + a ribonucleoside 5'-diphosphate. In terms of biological role, involved in mRNA degradation. Catalyzes the phosphorolysis of single-stranded polyribonucleotides processively in the 3'- to 5'-direction. This chain is Polyribonucleotide nucleotidyltransferase, found in Thermotoga neapolitana (strain ATCC 49049 / DSM 4359 / NBRC 107923 / NS-E).